A 396-amino-acid polypeptide reads, in one-letter code: Purine ribonucleoside efflux pump NepI (396 aa).

The Cytoplasmic portion of the chain corresponds to 1–21 (MSEFIAENRGADAITRPNWSA). The chain crosses the membrane as a helical span at residues 22 to 42 (VFSVAFCVACLIIVEFLPVSL). The Periplasmic segment spans residues 43-54 (LTPMAQDLGISE). A helical transmembrane segment spans residues 55 to 75 (GVAGQSVTVTAFVAMFASLFI). Topologically, residues 76 to 85 (TQTIQATDRC) are cytoplasmic. The chain crosses the membrane as a helical span at residues 86–106 (YVVILFAVLLTLSCLLVSFAN). A topological domain (periplasmic) is located at residue S107. Residues 108–128 (FSLLLIGRACLGLALGGFWAM) form a helical membrane-spanning segment. Topologically, residues 129–147 (SASLTMRLVPPRTVPKALS) are cytoplasmic. The helical transmembrane segment at 148-168 (VIFGAVSIALVIAAPLGSFLG) threads the bilayer. Residues 169–175 (ELIGWRN) lie on the Periplasmic side of the membrane. Residues 176–196 (VFNAAAVMGVLCIFWIIKSLP) traverse the membrane as a helical segment. At 197–215 (SLPGEPSHQKQNTFRLLQR) the chain is on the cytoplasmic side. The chain crosses the membrane as a helical span at residues 216 to 236 (PGVMAGMIAIFMSFAGQFAFF). Residues 237-255 (TYIRPVYMNLAGFGVDGLT) lie on the Periplasmic side of the membrane. Residues 256 to 276 (LVLLSFGIASFIGTSLSSFIL) traverse the membrane as a helical segment. At 277 to 281 (KRSVK) the chain is on the cytoplasmic side. A helical membrane pass occupies residues 282–302 (LALAGAPLILAVSALVLTLWG). Topologically, residues 303–305 (SDK) are periplasmic. The helical transmembrane segment at 306–326 (IVATGVAIIWGLTFALVPVGW) threads the bilayer. Over 327 to 343 (STWITRSLADQAEKAGS) the chain is Cytoplasmic. The helical transmembrane segment at 344-364 (IQVAVIQLANTCGAAIGGYAL) threads the bilayer. Residues 365–366 (DN) are Periplasmic-facing. Residues 367–387 (IGLTSPLMLSGTLMLLTALLV) form a helical membrane-spanning segment. Residues 388–396 (TAKVKMKKS) lie on the Cytoplasmic side of the membrane.

The protein belongs to the major facilitator superfamily. DHA1 family. NepI (TC 2.A.1.2.26) subfamily.

Its subcellular location is the cell inner membrane. It carries out the reaction inosine(in) + H(+)(out) = inosine(out) + H(+)(in). The enzyme catalyses guanosine(in) + H(+)(out) = guanosine(out) + H(+)(in). Functionally, involved in the efflux of purine ribonucleosides, such as inosine and guanosine. The sequence is that of Purine ribonucleoside efflux pump NepI from Shigella boydii serotype 4 (strain Sb227).